A 610-amino-acid polypeptide reads, in one-letter code: UvrABC system protein C (610 aa).

The 79-residue stretch at 16-94 (SQPGVYRMYD…IKLYQPRYNV (79 aa)) folds into the GIY-YIG domain. Residues 204–239 (DQVLTQLIARMEKASQDLAFEEAARIRDQIQAVRRV) enclose the UVR domain.

It belongs to the UvrC family. Interacts with UvrB in an incision complex.

The protein localises to the cytoplasm. In terms of biological role, the UvrABC repair system catalyzes the recognition and processing of DNA lesions. UvrC both incises the 5' and 3' sides of the lesion. The N-terminal half is responsible for the 3' incision and the C-terminal half is responsible for the 5' incision. The chain is UvrABC system protein C from Salmonella agona (strain SL483).